The following is a 451-amino-acid chain: Uronate isomerase (451 aa).

Belongs to the metallo-dependent hydrolases superfamily. Uronate isomerase family.

It catalyses the reaction D-glucuronate = D-fructuronate. The catalysed reaction is aldehydo-D-galacturonate = keto-D-tagaturonate. It functions in the pathway carbohydrate metabolism; pentose and glucuronate interconversion. In Thermotoga neapolitana (strain ATCC 49049 / DSM 4359 / NBRC 107923 / NS-E), this protein is Uronate isomerase.